A 265-amino-acid polypeptide reads, in one-letter code: tRNA(His) guanylyltransferase (265 aa).

Residues D29, G30, and D76 each coordinate Mg(2+). Residues 29-34 and 75-76 contribute to the GTP site; these read DGKGFH and SD.

The protein belongs to the tRNA(His) guanylyltransferase family. Mg(2+) is required as a cofactor.

The enzyme catalyses a 5'-end ribonucleotide-tRNA(His) + GTP + ATP + H2O = a 5'-end phospho-guanosine-ribonucleotide-tRNA(His) + AMP + 2 diphosphate + H(+). Its function is as follows. Adds a GMP to the 5'-end of tRNA(His) after transcription and RNase P cleavage. This Debaryomyces hansenii (strain ATCC 36239 / CBS 767 / BCRC 21394 / JCM 1990 / NBRC 0083 / IGC 2968) (Yeast) protein is tRNA(His) guanylyltransferase (THG1).